The chain runs to 296 residues: 3-methyl-2-oxobutanoate hydroxymethyltransferase (296 aa).

Residues 1 to 14 (MTAPTPTPANAATP) are compositionally biased toward low complexity. Residues 1–29 (MTAPTPTPANAATPYGTLPPASPLPQRRP) form a disordered region. The Mg(2+) site is built by D71 and D114. 3-methyl-2-oxobutanoate-binding positions include 71 to 72 (DS), D114, and K143. E145 lines the Mg(2+) pocket. The active-site Proton acceptor is E212.

Belongs to the PanB family. Homodecamer; pentamer of dimers. It depends on Mg(2+) as a cofactor.

The protein resides in the cytoplasm. It catalyses the reaction 3-methyl-2-oxobutanoate + (6R)-5,10-methylene-5,6,7,8-tetrahydrofolate + H2O = 2-dehydropantoate + (6S)-5,6,7,8-tetrahydrofolate. It participates in cofactor biosynthesis; (R)-pantothenate biosynthesis; (R)-pantoate from 3-methyl-2-oxobutanoate: step 1/2. Catalyzes the reversible reaction in which hydroxymethyl group from 5,10-methylenetetrahydrofolate is transferred onto alpha-ketoisovalerate to form ketopantoate. The polypeptide is 3-methyl-2-oxobutanoate hydroxymethyltransferase (Paracidovorax citrulli (strain AAC00-1) (Acidovorax citrulli)).